We begin with the raw amino-acid sequence, 91 residues long: Small ribosomal subunit protein bS18 (91 aa).

The protein belongs to the bacterial ribosomal protein bS18 family. As to quaternary structure, part of the 30S ribosomal subunit. Forms a tight heterodimer with protein bS6.

Its function is as follows. Binds as a heterodimer with protein bS6 to the central domain of the 16S rRNA, where it helps stabilize the platform of the 30S subunit. The sequence is that of Small ribosomal subunit protein bS18 from Burkholderia ambifaria (strain MC40-6).